A 231-amino-acid chain; its full sequence is Probable methylthioribulose-1-phosphate dehydratase (231 aa).

A substrate-binding site is contributed by Cys90. The Zn(2+) site is built by His108 and His110. Glu132 functions as the Proton donor/acceptor in the catalytic mechanism. His188 is a Zn(2+) binding site.

The protein belongs to the aldolase class II family. MtnB subfamily. Requires Zn(2+) as cofactor.

The protein localises to the cytoplasm. The catalysed reaction is 5-(methylsulfanyl)-D-ribulose 1-phosphate = 5-methylsulfanyl-2,3-dioxopentyl phosphate + H2O. It functions in the pathway amino-acid biosynthesis; L-methionine biosynthesis via salvage pathway; L-methionine from S-methyl-5-thio-alpha-D-ribose 1-phosphate: step 2/6. Catalyzes the dehydration of methylthioribulose-1-phosphate (MTRu-1-P) into 2,3-diketo-5-methylthiopentyl-1-phosphate (DK-MTP-1-P). The polypeptide is Probable methylthioribulose-1-phosphate dehydratase (Anopheles gambiae (African malaria mosquito)).